Consider the following 143-residue polypeptide: uncharacterized protein (143 aa).

Positions 1–27 (MSDEIARLVADVFELAGLLRRSGEVVA) are cleaved as a signal peptide.

This is an uncharacterized protein from Mycobacterium tuberculosis (strain CDC 1551 / Oshkosh).